Reading from the N-terminus, the 59-residue chain is Protein SspF (59 aa).

This sequence belongs to the alpha/beta-type SASP family.

In terms of biological role, may play some important role in either sporulation or the dormant spore. The sequence is that of Protein SspF (sspF) from Bacillus cereus (strain ATCC 14579 / DSM 31 / CCUG 7414 / JCM 2152 / NBRC 15305 / NCIMB 9373 / NCTC 2599 / NRRL B-3711).